A 404-amino-acid chain; its full sequence is MDYSEIMVRHGELSTKGKNRMRFINKLKNNIQDVLAPFPAITVRSDRDRTHVSLNGTDYQPIVEALKLVFGVQALSPVYKLEKSVPLLVTAVQDIMTSLYRDGLTFKIATKRSDHAFELDSRELNSLLGGAVFEVLPNIQAQMKHPDVTLKVEIRDEAAYISYEEIKGAGGLPVGTSGKGMLMLSGGIDSPVAGYLALKRGLDIEVVHFASPPYTSPGALAKAQDLTRRLTRFGGNIQFIEVPFTEIQEEIKNKAPEAYLMTLTRRFMMRITDAIREQRKGLVIVNGESLGQVASQTLESMQAINAVTSTPIIRPVVTMDKLEIIEMAQAIDTFDISIQPFEDCCTIFAPDRPKTNPKLGNAEKYEERFDIDGLVQRAVSGIIVTEITPEIVNDEVENLIDALL.

Residues 60–165 (QPIVEALKLV…DEAAYISYEE (106 aa)) enclose the THUMP domain. ATP-binding positions include 183-184 (ML), 208-209 (HF), Arg-265, Gly-287, and Gln-296.

Belongs to the ThiI family.

The protein resides in the cytoplasm. The enzyme catalyses [ThiI sulfur-carrier protein]-S-sulfanyl-L-cysteine + a uridine in tRNA + 2 reduced [2Fe-2S]-[ferredoxin] + ATP + H(+) = [ThiI sulfur-carrier protein]-L-cysteine + a 4-thiouridine in tRNA + 2 oxidized [2Fe-2S]-[ferredoxin] + AMP + diphosphate. It carries out the reaction [ThiS sulfur-carrier protein]-C-terminal Gly-Gly-AMP + S-sulfanyl-L-cysteinyl-[cysteine desulfurase] + AH2 = [ThiS sulfur-carrier protein]-C-terminal-Gly-aminoethanethioate + L-cysteinyl-[cysteine desulfurase] + A + AMP + 2 H(+). It functions in the pathway cofactor biosynthesis; thiamine diphosphate biosynthesis. In terms of biological role, catalyzes the ATP-dependent transfer of a sulfur to tRNA to produce 4-thiouridine in position 8 of tRNAs, which functions as a near-UV photosensor. Also catalyzes the transfer of sulfur to the sulfur carrier protein ThiS, forming ThiS-thiocarboxylate. This is a step in the synthesis of thiazole, in the thiamine biosynthesis pathway. The sulfur is donated as persulfide by IscS. The sequence is that of Probable tRNA sulfurtransferase from Streptococcus pyogenes serotype M2 (strain MGAS10270).